Here is a 443-residue protein sequence, read N- to C-terminus: ATP-dependent protease ATPase subunit HslU (443 aa).

ATP-binding positions include isoleucine 20, 62–67, aspartate 255, glutamate 321, and arginine 393; that span reads GVGKTE.

Belongs to the ClpX chaperone family. HslU subfamily. A double ring-shaped homohexamer of HslV is capped on each side by a ring-shaped HslU homohexamer. The assembly of the HslU/HslV complex is dependent on binding of ATP.

The protein resides in the cytoplasm. Functionally, ATPase subunit of a proteasome-like degradation complex; this subunit has chaperone activity. The binding of ATP and its subsequent hydrolysis by HslU are essential for unfolding of protein substrates subsequently hydrolyzed by HslV. HslU recognizes the N-terminal part of its protein substrates and unfolds these before they are guided to HslV for hydrolysis. This Helicobacter pylori (strain ATCC 700392 / 26695) (Campylobacter pylori) protein is ATP-dependent protease ATPase subunit HslU.